Reading from the N-terminus, the 156-residue chain is Aspartate carbamoyltransferase regulatory chain (156 aa).

Zn(2+)-binding residues include cysteine 110, cysteine 115, cysteine 140, and cysteine 143.

It belongs to the PyrI family. As to quaternary structure, contains catalytic and regulatory chains. Zn(2+) serves as cofactor.

Involved in allosteric regulation of aspartate carbamoyltransferase. The chain is Aspartate carbamoyltransferase regulatory chain from Methanocella arvoryzae (strain DSM 22066 / NBRC 105507 / MRE50).